Consider the following 360-residue polypeptide: Aminomethyltransferase (360 aa).

Belongs to the GcvT family. In terms of assembly, the glycine cleavage system is composed of four proteins: P, T, L and H.

It catalyses the reaction N(6)-[(R)-S(8)-aminomethyldihydrolipoyl]-L-lysyl-[protein] + (6S)-5,6,7,8-tetrahydrofolate = N(6)-[(R)-dihydrolipoyl]-L-lysyl-[protein] + (6R)-5,10-methylene-5,6,7,8-tetrahydrofolate + NH4(+). Functionally, the glycine cleavage system catalyzes the degradation of glycine. The sequence is that of Aminomethyltransferase from Pseudoalteromonas translucida (strain TAC 125).